The chain runs to 377 residues: Tubulin--tyrosine ligase (377 aa).

Positions 3-370 (TFVVRQENSS…PPDTEQVPQQ (368 aa)) constitute a TTL domain.

The protein belongs to the tubulin--tyrosine ligase family. Monomer. Mg(2+) is required as a cofactor. K(+) serves as cofactor.

The catalysed reaction is C-terminal L-alpha-aminoacyl-L-glutamyl-L-glutamyl-[tubulin] + L-tyrosine + ATP = C-terminal L-alpha-aminoacyl-L-glutamyl-L-glutamyl-L-tyrosyl-[tubulin] + ADP + phosphate + H(+). Functionally, catalyzes the post-translational addition of a tyrosine to the C-terminal end of detyrosinated alpha-tubulin. The polypeptide is Tubulin--tyrosine ligase (Ttl) (Rattus norvegicus (Rat)).